We begin with the raw amino-acid sequence, 157 residues long: Transcription antitermination protein NusB (157 aa).

The protein belongs to the NusB family.

In terms of biological role, involved in transcription antitermination. Required for transcription of ribosomal RNA (rRNA) genes. Binds specifically to the boxA antiterminator sequence of the ribosomal RNA (rrn) operons. The polypeptide is Transcription antitermination protein NusB (Xylella fastidiosa (strain M12)).